A 436-amino-acid chain; its full sequence is ATP-sensitive inward rectifier potassium channel 14 (436 aa).

Topologically, residues 1 to 83 (MGLARALRRL…LSDLFTTCVD (83 aa)) are cytoplasmic. A disordered region spans residues 14-43 (LDSGDSRAGDEEEAGPGLCRNGWAPAPVQS). An S-nitrosocysteine modification is found at cysteine 81. A helical membrane pass occupies residues 84–110 (VRWRWMCLLFSCSFLASWLLFGLAFWL). Residues 111–133 (IASLHGDLAAPPPPAPCFSHVAS) are Extracellular-facing. An intramembrane region (helical; Pore-forming) is located at residues 134-150 (FLAAFLFALETQTSIGY). The short motif at 147–152 (SIGYGV) is the Selectivity filter element. The Extracellular segment spans residues 151-159 (GVRSVTEEC). The helical transmembrane segment at 160-187 (PAAVAAVVLQCIAGCVLDAFVVGAVMAK) threads the bilayer. At 188–436 (MAKPKKRNET…TPTLALTLPP (249 aa)) the chain is on the cytoplasmic side. The span at 400–418 (QEEDEDDETEEGNGVETED) shows a compositional bias: acidic residues. Residues 400 to 436 (QEEDEDDETEEGNGVETEDGAASPRVLTPTLALTLPP) are disordered. A compositionally biased stretch (low complexity) spans 426 to 436 (LTPTLALTLPP).

This sequence belongs to the inward rectifier-type potassium channel (TC 1.A.2.1) family. KCNJ14 subfamily. As to expression, expressed preferentially in retina.

The protein resides in the membrane. The catalysed reaction is K(+)(in) = K(+)(out). Its activity is regulated as follows. Channel activity is regulated by variations of cytosolic pH; channels are activated by alkaline and inhibited by acidic pH values. Inhibited by Ba(2+) and Cs(+) in a voltage-dependent manner; sensitivity to those inhibitors is lower than in other Kir channels. Inward rectifier potassium channels are characterized by a greater tendency to allow potassium to flow into the cell rather than out of it. Their voltage dependence is regulated by the concentration of extracellular potassium; as external potassium is raised, the voltage range of the channel opening shifts to more positive voltages. This Homo sapiens (Human) protein is ATP-sensitive inward rectifier potassium channel 14 (KCNJ14).